Here is a 142-residue protein sequence, read N- to C-terminus: Hemoglobin subunit alpha-A (142 aa).

In terms of domain architecture, Globin spans 2 to 142; sequence VLSANDKTNV…VGNVLTAKYR (141 aa). An O2-binding site is contributed by H59. A heme b-binding site is contributed by H88.

This sequence belongs to the globin family. Heterotetramer of two alpha chains and two beta chains. In terms of tissue distribution, red blood cells.

Functionally, involved in oxygen transport from the lung to the various peripheral tissues. The chain is Hemoglobin subunit alpha-A (HBAA) from Aquila chrysaetos (Golden eagle).